Here is an 83-residue protein sequence, read N- to C-terminus: Cytotoxin homolog 5 (83 aa).

An N-terminal signal peptide occupies residues 1–21 (MKTLLLTMVVVTIVCLDLGYT). Disulfide bonds link Cys-24–Cys-43, Cys-36–Cys-61, Cys-65–Cys-76, and Cys-77–Cys-82.

Belongs to the three-finger toxin family. Short-chain subfamily. Orphan group XV sub-subfamily. As to expression, expressed by the venom gland.

The protein resides in the secreted. It localises to the target cell membrane. In terms of biological role, has low cytotoxic activity. The chain is Cytotoxin homolog 5 from Naja atra (Chinese cobra).